Reading from the N-terminus, the 190-residue chain is Large ribosomal subunit protein uL10 (190 aa).

This sequence belongs to the universal ribosomal protein uL10 family. As to quaternary structure, part of the ribosomal stalk of the 50S ribosomal subunit. The N-terminus interacts with L11 and the large rRNA to form the base of the stalk. The C-terminus forms an elongated spine to which L12 dimers bind in a sequential fashion forming a multimeric L10(L12)X complex.

Functionally, forms part of the ribosomal stalk, playing a central role in the interaction of the ribosome with GTP-bound translation factors. The chain is Large ribosomal subunit protein uL10 from Trichodesmium erythraeum (strain IMS101).